A 264-amino-acid chain; its full sequence is S-adenosylmethionine decarboxylase proenzyme (264 aa).

The Schiff-base intermediate with substrate; via pyruvic acid role is filled by Ser-112. Ser-112 is modified (pyruvic acid (Ser); by autocatalysis). The active-site Proton acceptor; for processing activity is the His-117. Cys-140 (proton donor; for catalytic activity) is an active-site residue.

This sequence belongs to the prokaryotic AdoMetDC family. Type 2 subfamily. As to quaternary structure, heterooctamer of four alpha and four beta chains arranged as a tetramer of alpha/beta heterodimers. It depends on pyruvate as a cofactor. In terms of processing, is synthesized initially as an inactive proenzyme. Formation of the active enzyme involves a self-maturation process in which the active site pyruvoyl group is generated from an internal serine residue via an autocatalytic post-translational modification. Two non-identical subunits are generated from the proenzyme in this reaction, and the pyruvate is formed at the N-terminus of the alpha chain, which is derived from the carboxyl end of the proenzyme. The post-translation cleavage follows an unusual pathway, termed non-hydrolytic serinolysis, in which the side chain hydroxyl group of the serine supplies its oxygen atom to form the C-terminus of the beta chain, while the remainder of the serine residue undergoes an oxidative deamination to produce ammonia and the pyruvoyl group blocking the N-terminus of the alpha chain.

It carries out the reaction S-adenosyl-L-methionine + H(+) = S-adenosyl 3-(methylsulfanyl)propylamine + CO2. The protein operates within amine and polyamine biosynthesis; S-adenosylmethioninamine biosynthesis; S-adenosylmethioninamine from S-adenosyl-L-methionine: step 1/1. Its function is as follows. Catalyzes the decarboxylation of S-adenosylmethionine to S-adenosylmethioninamine (dcAdoMet), the propylamine donor required for the synthesis of the polyamines spermine and spermidine from the diamine putrescine. This is S-adenosylmethionine decarboxylase proenzyme from Klebsiella pneumoniae subsp. pneumoniae (strain ATCC 700721 / MGH 78578).